Reading from the N-terminus, the 258-residue chain is Type III pantothenate kinase (258 aa).

6–13 (DVGNSDTV) lines the ATP pocket. Substrate is bound at residue 108-111 (GSDR). Residue aspartate 110 is the Proton acceptor of the active site. Residue aspartate 130 coordinates K(+). An ATP-binding site is contributed by threonine 133. Threonine 185 contacts substrate.

The protein belongs to the type III pantothenate kinase family. In terms of assembly, homodimer. It depends on NH4(+) as a cofactor. The cofactor is K(+).

The protein resides in the cytoplasm. It catalyses the reaction (R)-pantothenate + ATP = (R)-4'-phosphopantothenate + ADP + H(+). It functions in the pathway cofactor biosynthesis; coenzyme A biosynthesis; CoA from (R)-pantothenate: step 1/5. Functionally, catalyzes the phosphorylation of pantothenate (Pan), the first step in CoA biosynthesis. The chain is Type III pantothenate kinase from Thermobifida fusca (strain YX).